A 245-amino-acid polypeptide reads, in one-letter code: 1-(5-phosphoribosyl)-5-[(5-phosphoribosylamino)methylideneamino] imidazole-4-carboxamide isomerase (245 aa).

Aspartate 8 functions as the Proton acceptor in the catalytic mechanism. Catalysis depends on aspartate 129, which acts as the Proton donor.

Belongs to the HisA/HisF family.

The protein localises to the cytoplasm. The catalysed reaction is 1-(5-phospho-beta-D-ribosyl)-5-[(5-phospho-beta-D-ribosylamino)methylideneamino]imidazole-4-carboxamide = 5-[(5-phospho-1-deoxy-D-ribulos-1-ylimino)methylamino]-1-(5-phospho-beta-D-ribosyl)imidazole-4-carboxamide. It participates in amino-acid biosynthesis; L-histidine biosynthesis; L-histidine from 5-phospho-alpha-D-ribose 1-diphosphate: step 4/9. The chain is 1-(5-phosphoribosyl)-5-[(5-phosphoribosylamino)methylideneamino] imidazole-4-carboxamide isomerase from Geotalea daltonii (strain DSM 22248 / JCM 15807 / FRC-32) (Geobacter daltonii).